The following is a 125-amino-acid chain: Prefoldin subunit beta (125 aa).

Belongs to the prefoldin subunit beta family. As to quaternary structure, heterohexamer of two alpha and four beta subunits.

The protein resides in the cytoplasm. Molecular chaperone capable of stabilizing a range of proteins. Seems to fulfill an ATP-independent, HSP70-like function in archaeal de novo protein folding. This chain is Prefoldin subunit beta, found in Pyrobaculum calidifontis (strain DSM 21063 / JCM 11548 / VA1).